Here is a 341-residue protein sequence, read N- to C-terminus: L-threonine 3-dehydrogenase (341 aa).

Cysteine 38 is a binding site for Zn(2+). Residues threonine 40 and histidine 43 each act as charge relay system in the active site. Histidine 63, glutamate 64, cysteine 93, cysteine 96, cysteine 99, and cysteine 107 together coordinate Zn(2+). Residues isoleucine 175, aspartate 195, arginine 200, 262-264, and 286-287 each bind NAD(+); these read LGI and IY.

Belongs to the zinc-containing alcohol dehydrogenase family. In terms of assembly, homotetramer. The cofactor is Zn(2+).

It localises to the cytoplasm. It catalyses the reaction L-threonine + NAD(+) = (2S)-2-amino-3-oxobutanoate + NADH + H(+). The protein operates within amino-acid degradation; L-threonine degradation via oxydo-reductase pathway; glycine from L-threonine: step 1/2. Its function is as follows. Catalyzes the NAD(+)-dependent oxidation of L-threonine to 2-amino-3-ketobutyrate. This is L-threonine 3-dehydrogenase from Cronobacter sakazakii (strain ATCC BAA-894) (Enterobacter sakazakii).